A 377-amino-acid chain; its full sequence is Citrate synthase (377 aa).

Residues His220, His259, and Asp313 contribute to the active site.

This sequence belongs to the citrate synthase family. Homodimer.

The catalysed reaction is oxaloacetate + acetyl-CoA + H2O = citrate + CoA + H(+). It functions in the pathway carbohydrate metabolism; tricarboxylic acid cycle; isocitrate from oxaloacetate: step 1/2. Functionally, might regulate the synthesis and function of enzymes involved in later enzymatic steps of Krebs cycle. Loss in activity results in sporulation defect. The protein is Citrate synthase (gltA) of Deinococcus radiodurans (strain ATCC 13939 / DSM 20539 / JCM 16871 / CCUG 27074 / LMG 4051 / NBRC 15346 / NCIMB 9279 / VKM B-1422 / R1).